A 347-amino-acid polypeptide reads, in one-letter code: High mobility group protein 20A (347 aa).

Polar residues-rich tracts occupy residues 1–10 and 40–49; these read MENLMTSSTL and SGATSSTNNP. 2 disordered regions span residues 1–113 and 179–211; these read MENL…YVRF and FSRK…TEVK. Over residues 55 to 66 the composition is skewed to low complexity; sequence LSQGQLLQSESS. The span at 72–82 shows a compositional bias: basic and acidic residues; it reads NEQRHEDEQRS. Residues 83–96 are compositionally biased toward basic residues; the sequence is KRGGWSKGRKRKKP. A DNA-binding region (HMG box) is located at residues 103-171; the sequence is PKSPLTGYVR…RYMKELEQYQ (69 aa). A Phosphoserine modification is found at serine 105. Basic and acidic residues predominate over residues 182-211; it reads KTQDRQKGKSHRQDAARQATHDHEKETEVK. A coiled-coil region spans residues 229–273; the sequence is SKAREAELRQLRKSNMEFEERNAALQKHVESMRTAVEKLEVDVIQ.

Interacts with DTNB. In terms of tissue distribution, ubiquitous.

It localises to the nucleus. Functionally, plays a role in neuronal differentiation as chromatin-associated protein. Acts as inhibitor of HMG20B. Overcomes the repressive effects of the neuronal silencer REST and induces the activation of neuronal-specific genes. Involved in the recruitment of the histone methyltransferase KMT2A/MLL1 and consequent increased methylation of histone H3 lysine 4. This Homo sapiens (Human) protein is High mobility group protein 20A (HMG20A).